Here is a 303-residue protein sequence, read N- to C-terminus: Glutathione transport system permease protein GsiD (303 aa).

7 consecutive transmembrane segments (helical) span residues 37 to 57 (QHVA…AIFA), 105 to 125 (LAAG…LGLL), 144 to 164 (LFAF…GSGI), 165 to 185 (ANVI…LVRG), 208 to 228 (TILF…FFTM), 230 to 250 (IGTS…AQPP), and 266 to 286 (VIAP…VLAF). Residues 101–290 (AQISLAAGVF…LTVLAFNLLG (190 aa)) form the ABC transmembrane type-1 domain.

Belongs to the binding-protein-dependent transport system permease family. In terms of assembly, the complex is composed of two ATP-binding proteins (GsiA), two transmembrane proteins (GsiC and GsiD) and a solute-binding protein (GsiB).

It localises to the cell inner membrane. Part of the ABC transporter complex GsiABCD involved in glutathione import. Probably responsible for the translocation of the substrate across the membrane. This Salmonella paratyphi A (strain ATCC 9150 / SARB42) protein is Glutathione transport system permease protein GsiD.